Consider the following 101-residue polypeptide: Protein Tat (101 aa).

An interaction with human CREBBP region spans residues 1 to 24 (MEPIDPNLEPWNHPGSQPKTACNN). The transactivation stretch occupies residues 1–48 (MEPIDPNLEPWNHPGSQPKTACNNCYCKQCCYHCQLCFTKKGLGISYG). Zn(2+)-binding residues include C22, C25, and C27. Positions 22 to 37 (CNNCYCKQCCYHCQLC) are cysteine-rich. Residue K28 is modified to N6-acetyllysine; by host PCAF. Residues C30, H33, C34, and C37 each coordinate Zn(2+). A core region spans residues 38 to 48 (FTKKGLGISYG). A disordered region spans residues 48–101 (GRRKRKQRRRTSESSQNHQDPVPKQPLSQPGGIETGQKKSKKEVESQTTSDQFA). A Nuclear localization signal, RNA-binding (TAR), and protein transduction motif is present at residues 49–57 (RRKRKQRRR). An interaction with the host capping enzyme RNGTT region spans residues 49-86 (RRKRKQRRRTSESSQNHQDPVPKQPLSQPGGIETGQKK). K51 bears the N6-acetyllysine; by host EP300 and GCN5L2 mark. Asymmetric dimethylarginine; by host PRMT6 is present on R52. A Glycyl lysine isopeptide (Lys-Gly) (interchain with G-Cter in ubiquitin) cross-link involves residue K71.

The protein belongs to the lentiviruses Tat family. Interacts with host CCNT1. Associates with the P-TEFb complex composed at least of Tat, P-TEFb (CDK9 and CCNT1), TAR RNA, RNA Pol II. Recruits the HATs CREBBP, TAF1/TFIID, EP300, PCAF and GCN5L2. Interacts with host KAT5/Tip60; this interaction targets the latter to degradation. Interacts with the host deacetylase SIRT1. Interacts with host capping enzyme RNGTT; this interaction stimulates RNGTT. Binds to host KDR, and to the host integrins ITGAV/ITGB3 and ITGA5/ITGB1. Interacts with host KPNB1/importin beta-1 without previous binding to KPNA1/importin alpha-1. Interacts with EIF2AK2. Interacts with host nucleosome assembly protein NAP1L1; this interaction may be required for the transport of Tat within the nucleus, since the two proteins interact at the nuclear rim. Interacts with host C1QBP/SF2P32; this interaction involves lysine-acetylated Tat. Interacts with the host chemokine receptors CCR2, CCR3 and CXCR4. Interacts with host DPP4/CD26; this interaction may trigger an anti-proliferative effect. Interacts with host LDLR. Interacts with the host extracellular matrix metalloproteinase MMP1. Interacts with host PRMT6; this interaction mediates Tat's methylation. Interacts with, and is ubiquitinated by MDM2/Hdm2. Interacts with host PSMC3 and HTATIP2. Interacts with STAB1; this interaction may overcome SATB1-mediated repression of IL2 and IL2RA (interleukin) in T cells by binding to the same domain than HDAC1. Interacts (when acetylated) with human CDK13, thereby increasing HIV-1 mRNA splicing and promoting the production of the doubly spliced HIV-1 protein Nef. Interacts with host TBP; this interaction modulates the activity of transcriptional pre-initiation complex. Interacts with host RELA. Post-translationally, asymmetrical arginine methylation by host PRMT6 seems to diminish the transactivation capacity of Tat and affects the interaction with host CCNT1. Polyubiquitination by host MDM2 does not target Tat to degradation, but activates its transactivation function and fosters interaction with CCNT1 and TAR RNA. In terms of processing, phosphorylated by EIF2AK2 on serine and threonine residues adjacent to the basic region important for TAR RNA binding and function. Phosphorylation of Tat by EIF2AK2 is dependent on the prior activation of EIF2AK2 by dsRNA.

Its subcellular location is the host nucleus. It is found in the host nucleolus. The protein resides in the host cytoplasm. The protein localises to the secreted. Functionally, transcriptional activator that increases RNA Pol II processivity, thereby increasing the level of full-length viral transcripts. Recognizes a hairpin structure at the 5'-LTR of the nascent viral mRNAs referred to as the transactivation responsive RNA element (TAR) and recruits the cyclin T1-CDK9 complex (P-TEFb complex) that will in turn hyperphosphorylate the RNA polymerase II to allow efficient elongation. The CDK9 component of P-TEFb and other Tat-activated kinases hyperphosphorylate the C-terminus of RNA Pol II that becomes stabilized and much more processive. Other factors such as HTATSF1/Tat-SF1, SUPT5H/SPT5, and HTATIP2 are also important for Tat's function. Besides its effect on RNA Pol II processivity, Tat induces chromatin remodeling of proviral genes by recruiting the histone acetyltransferases (HATs) CREBBP, EP300 and PCAF to the chromatin. This also contributes to the increase in proviral transcription rate, especially when the provirus integrates in transcriptionally silent region of the host genome. To ensure maximal activation of the LTR, Tat mediates nuclear translocation of NF-kappa-B by interacting with host RELA. Through its interaction with host TBP, Tat may also modulate transcription initiation. Tat can reactivate a latently infected cell by penetrating in it and transactivating its LTR promoter. In the cytoplasm, Tat is thought to act as a translational activator of HIV-1 mRNAs. Extracellular circulating Tat can be endocytosed by surrounding uninfected cells via the binding to several surface receptors such as CD26, CXCR4, heparan sulfate proteoglycans (HSPG) or LDLR. Neurons are rarely infected, but they internalize Tat via their LDLR. Through its interaction with nuclear HATs, Tat is potentially able to control the acetylation-dependent cellular gene expression. Modulates the expression of many cellular genes involved in cell survival, proliferation or in coding for cytokines or cytokine receptors. Tat plays a role in T-cell and neurons apoptosis. Tat induced neurotoxicity and apoptosis probably contribute to neuroAIDS. Circulating Tat also acts as a chemokine-like and/or growth factor-like molecule that binds to specific receptors on the surface of the cells, affecting many cellular pathways. In the vascular system, Tat binds to ITGAV/ITGB3 and ITGA5/ITGB1 integrins dimers at the surface of endothelial cells and competes with bFGF for heparin-binding sites, leading to an excess of soluble bFGF. This is Protein Tat from Pan troglodytes (Chimpanzee).